The sequence spans 404 residues: Glutamate-pyruvate aminotransferase AlaA (404 aa).

Positions 41 and 179 each coordinate L-alanine. Lys-240 carries the post-translational modification N6-(pyridoxal phosphate)lysine. Arg-378 serves as a coordination point for L-alanine.

It belongs to the class-I pyridoxal-phosphate-dependent aminotransferase family. In terms of assembly, homodimer. The cofactor is pyridoxal 5'-phosphate.

The enzyme catalyses L-alanine + 2-oxoglutarate = pyruvate + L-glutamate. The protein operates within amino-acid biosynthesis; L-alanine biosynthesis. In terms of biological role, involved in the biosynthesis of alanine. Catalyzes the transamination of pyruvate by glutamate, leading to the formation of L-alanine and 2-oxoglutarate. Is also able to catalyze the reverse reaction. This is Glutamate-pyruvate aminotransferase AlaA (alaA) from Haemophilus influenzae (strain ATCC 51907 / DSM 11121 / KW20 / Rd).